We begin with the raw amino-acid sequence, 365 residues long: Flagellar P-ring protein 2 (365 aa).

The first 19 residues, Met1 to Ser19, serve as a signal peptide directing secretion.

Belongs to the FlgI family. As to quaternary structure, the basal body constitutes a major portion of the flagellar organelle and consists of four rings (L,P,S, and M) mounted on a central rod.

It is found in the periplasm. The protein localises to the bacterial flagellum basal body. In terms of biological role, assembles around the rod to form the L-ring and probably protects the motor/basal body from shearing forces during rotation. The sequence is that of Flagellar P-ring protein 2 from Chromobacterium violaceum (strain ATCC 12472 / DSM 30191 / JCM 1249 / CCUG 213 / NBRC 12614 / NCIMB 9131 / NCTC 9757 / MK).